A 156-amino-acid polypeptide reads, in one-letter code: Ribosomal RNA large subunit methyltransferase H (156 aa).

S-adenosyl-L-methionine is bound by residues Leu-73, Gly-104, and 123–128 (LSDLTL).

It belongs to the RNA methyltransferase RlmH family. In terms of assembly, homodimer.

The protein resides in the cytoplasm. It carries out the reaction pseudouridine(1915) in 23S rRNA + S-adenosyl-L-methionine = N(3)-methylpseudouridine(1915) in 23S rRNA + S-adenosyl-L-homocysteine + H(+). Specifically methylates the pseudouridine at position 1915 (m3Psi1915) in 23S rRNA. In Methylibium petroleiphilum (strain ATCC BAA-1232 / LMG 22953 / PM1), this protein is Ribosomal RNA large subunit methyltransferase H.